We begin with the raw amino-acid sequence, 2581 residues long: Highly reducing polyketide synthase sorA (2581 aa).

The Ketosynthase family 3 (KS3) domain occupies 14–436; that stretch reads SEPIAIIGMS…GSNAHIILED (423 aa). Active-site for beta-ketoacyl synthase activity residues include Cys-187, His-322, and His-359. Residues 574 to 868 form a malonyl-CoA:ACP transacylase (MAT) domain region; that stretch reads VFTGQGAQWN…VVEVGPHTAL (295 aa). The interval 966–1103 is N-terminal hotdog fold; it reads HDLLGSIVEG…GLVSVELGES (138 aa). The tract at residues 966–1270 is dehydratase (DH) domain; the sequence is HDLLGSIVEG…GFSYQSLGRS (305 aa). The PKS/mFAS DH domain occupies 966-1273; the sequence is HDLLGSIVEG…YQSLGRSTSL (308 aa). The active-site Proton acceptor; for dehydratase activity is His-998. A C-terminal hotdog fold region spans residues 1119–1273; the sequence is TRRILPADLF…YQSLGRSTSL (155 aa). The active-site Proton donor; for dehydratase activity is Asp-1184. Residues 1461 to 1568 are methyltransferase (CMet) domain; the sequence is LEVGAATGAI…SSLLKPGGTL (108 aa). The enoyl reductase (ER)domain stretch occupies residues 1873 to 2184; the sequence is LKPDLLVFGD…AGDQIGKVVL (312 aa). A ketoreductase (KR) domain region spans residues 2207–2389; the sequence is VSYLIVGGSG…AVSIDLSVVN (183 aa). The region spanning 2497–2574 is the Carrier domain; the sequence is DAVRVVGTAI…QLAIDVVDRS (78 aa). Ser-2534 carries the post-translational modification O-(pantetheine 4'-phosphoryl)serine.

It functions in the pathway secondary metabolite biosynthesis. Its function is as follows. Highly reducing polyketide synthase; part of the gene cluster that mediates the biosynthesis of sorbicillinoids, a diverse group of yellow secondary metabolites that restrict growth of competing pathogenic fungi but not of bacteria. Sorbicillinoids biosynthesis requires the action of two PKSs. SorA iteratively combines three acetyl units and the growing chain is modified by the ketoacyl reductase subunit, and optional by the enoyl reductase subunit in the second cycle. The polyketide is then handed over to the PKS SorB, which adds three more acetyl units, and two methyl groups. SorB releases an aldehyde, which undergoes spontaneous cyclization resulting in the formation of sorbicillin or 2',3'-dihydrosorbicillin. The monooxygenase sorC oxidizes sorbicillin and 2',3'-dihydrosorbicillin to 2',3'-dihydrosorbicillinol and sorbicillinol, respectively. The oxidoreductase sorD further converts sorbicillinol into oxosorbicillinol. Sorbicillinol is the building block for the other sorbicillinoids such as disorbicillinol, bisvertinolon, and dihydrobisvertinolone. This chain is Highly reducing polyketide synthase sorA, found in Penicillium rubens (strain ATCC 28089 / DSM 1075 / NRRL 1951 / Wisconsin 54-1255) (Penicillium chrysogenum).